We begin with the raw amino-acid sequence, 256 residues long: uncharacterized protein (256 aa).

7 consecutive transmembrane segments (helical) span residues 32-52 (ILASIFIGFGITAASKTGSYF), 59-79 (FAFPAAAVTFGAAILMIAYGG), 112-132 (YAGNLIGAILFAILISATGLF), 156-176 (LFFRGMLCNWLVCLAFFIPMS), 184-204 (LFTMMLFVFCFFISGFEHSIA), 207-227 (CTFAISLLIEHPDTVTLMGAV), and 230-250 (LIPVTLGNLTAGIVMMGWMYY).

This sequence belongs to the FNT transporter (TC 1.A.16) family.

Its subcellular location is the cell membrane. This is an uncharacterized protein from Bacillus subtilis (strain 168).